The sequence spans 399 residues: Glutathione S-transferase LANCL1 (399 aa).

At Ala2 the chain carries N-acetylalanine. Lys142 is subject to N6-acetyllysine. Cys276 contributes to the Zn(2+) binding site. Lys317 serves as a coordination point for glutathione. Residues Cys322 and His323 each contribute to the Zn(2+) site. Residue 364–367 participates in glutathione binding; it reads RTAD.

This sequence belongs to the LanC-like protein family. In terms of assembly, interacts with the C-terminal of STOM. Interacts with the EPS8 SH3 domain. Interaction with EPS8 is inhibited by glutathione binding. Detected in spinal cord (at protein level). Ubiquitous. Strongly expressed in brain, testis, alveolar macrophages and epithelial cells of the lung, kidney and intestine. Expression in brain increases during the first postnatal month and remaining high in adult.

It is found in the cytoplasm. The protein resides in the cell membrane. It carries out the reaction RX + glutathione = an S-substituted glutathione + a halide anion + H(+). It catalyses the reaction 1-chloro-2,4-dinitrobenzene + glutathione = 2,4-dinitrophenyl-S-glutathione + chloride + H(+). Functions as a glutathione transferase. Catalyzes conjugation of the glutathione (GSH) to artificial substrates 1-chloro-2,4-dinitrobenzene (CDNB) and p-nitrophenyl acetate. Mitigates neuronal oxidative stress during normal postnatal development and in response to oxidative stresses probably through GSH antioxidant defense mechanism. May play a role in EPS8 signaling. Binds glutathione. In Mus musculus (Mouse), this protein is Glutathione S-transferase LANCL1.